Reading from the N-terminus, the 581-residue chain is Serine/threonine-protein kinase SSN3 (581 aa).

Residues 34–57 form a disordered region; sequence LWSQQQQQQLLDTKGSASTSKSPM. A compositionally biased stretch (polar residues) spans 48–57; that stretch reads GSASTSKSPM. A Protein kinase domain is found at 85-475; sequence YEIIGYIAAG…AIDALEHEYF (391 aa). Residues 91–99 and Lys-195 each bind ATP; that span reads IAAGTYGKV. Catalysis depends on Asp-298, which acts as the Proton acceptor.

It belongs to the protein kinase superfamily. CMGC Ser/Thr protein kinase family. CDC2/CDKX subfamily. Component of the SRB8-11 complex, a regulatory module of the Mediator complex. Requires Mg(2+) as cofactor.

Its subcellular location is the nucleus. It carries out the reaction L-seryl-[protein] + ATP = O-phospho-L-seryl-[protein] + ADP + H(+). It catalyses the reaction L-threonyl-[protein] + ATP = O-phospho-L-threonyl-[protein] + ADP + H(+). The catalysed reaction is [DNA-directed RNA polymerase] + ATP = phospho-[DNA-directed RNA polymerase] + ADP + H(+). Component of the SRB8-11 complex. The SRB8-11 complex is a regulatory module of the Mediator complex which is itself involved in regulation of basal and activated RNA polymerase II-dependent transcription. The SRB8-11 complex may be involved in the transcriptional repression of a subset of genes regulated by Mediator. It may inhibit the association of the Mediator complex with RNA polymerase II to form the holoenzyme complex. The SRB8-11 complex phosphorylates the C-terminal domain (CTD) of the largest subunit of RNA polymerase II. In Eremothecium gossypii (strain ATCC 10895 / CBS 109.51 / FGSC 9923 / NRRL Y-1056) (Yeast), this protein is Serine/threonine-protein kinase SSN3 (SSN3).